A 469-amino-acid polypeptide reads, in one-letter code: MSSGKITQVIGPVVDVEFGSDAKLPEINNALIVYKDVNGLKTKITLEVALELGDGAVRTIAMESTDGLTRGLEVLDTGKAVSVPVGESTLGRVFNVLGDVIDGGEDFPADAERNPIHKKAPTFDELSTANEVLVTGIKVVDLLAPYLKGGKVGLFGGAGVGKTVLIQELIHNIAQEHGGISVFTGVGERTREGNDLYWEMKESGVIEKTAMVFGQMNEPPGARMRVALTGLTIAEYFRDVQGQDVLLFIDNIFRFTQAGSEVSALLGRMPSAVGYQPTLATEMGQLQERITSTKKGSVTSIQAIYVPADDYTDPAPATAFAHLDATTNLERRLTQMGIYPAVDPLASSSRAITPEIVGEEHYEVAMEVQRVLQRYKELQDIIAILGMDELSDDEKILVGRARRIQFFLSQNFHVAEQFTGQPGSYVPIDKTVHDFKEILEGKYDEVPEDAFRGVGPIEDVLAKAKSMGY.

156–163 (GGAGVGKT) lines the ATP pocket.

Belongs to the ATPase alpha/beta chains family. In terms of assembly, F-type ATPases have 2 components, CF(1) - the catalytic core - and CF(0) - the membrane proton channel. CF(1) has five subunits: alpha(3), beta(3), gamma(1), delta(1), epsilon(1). CF(0) has three main subunits: a(1), b(2) and c(9-12). The alpha and beta chains form an alternating ring which encloses part of the gamma chain. CF(1) is attached to CF(0) by a central stalk formed by the gamma and epsilon chains, while a peripheral stalk is formed by the delta and b chains.

It localises to the cell membrane. It catalyses the reaction ATP + H2O + 4 H(+)(in) = ADP + phosphate + 5 H(+)(out). Its function is as follows. Produces ATP from ADP in the presence of a proton gradient across the membrane. The catalytic sites are hosted primarily by the beta subunits. The chain is ATP synthase subunit beta from Lactococcus lactis subsp. cremoris (strain SK11).